Reading from the N-terminus, the 651-residue chain is Bromodomain-containing protein 7 (651 aa).

Disordered regions lie at residues 36–133 (ELST…EVEQ) and 257–298 (KDKV…KKKD). Residues 58–69 (HKDRKRKKRKKG) are compositionally biased toward basic residues. Residues 65-96 (KRKKGEKQVPGEEKEKRKRKVKEDKRKRDREH) carry the Nuclear localization signal motif. The span at 70 to 105 (EKQVPGEEKEKRKRKVKEDKRKRDREHPDSEGEQEL) shows a compositional bias: basic and acidic residues. Positions 131–235 (VEQTPLQEAL…HSGMKILSQE (105 aa)) constitute a Bromo domain. The span at 271 to 298 (GSGKDKGEPVDGDTKAFKTPNKEHKKKD) shows a compositional bias: basic and acidic residues. A coiled-coil region spans residues 533–564 (SEEAEIFQRKLDETTKLLRELQDAQNERLSTK).

The protein localises to the nucleus. It localises to the chromosome. In terms of biological role, acts both as coactivator and as corepressor. May play a role in chromatin remodeling. Participates in the Wnt signaling pathway. Transcriptional corepressor that down-regulates the expression of target genes. Binds to target promoters, leading to increased histone H3 acetylation. Coactivator for TP53-mediated activation of transcription of a set of target genes. Required for TP53-mediated cell-cycle arrest in response to oncogene activation. Inhibits cell cycle progression from G1 to S phase. This Gallus gallus (Chicken) protein is Bromodomain-containing protein 7 (BRD7).